A 644-amino-acid polypeptide reads, in one-letter code: MPVITLPDGSQRSFDHPVTVYDVAADIGPGLAKAALGGKIEGRLVDSSYPLEKDTKLTIITERDMDGLEIIRHSCAHLLAQAVKALYPEAQVTIGPVIEDGFYYDFAYPKGFTPEDLEAIEAKMRELVEQDLSVHRELKSREEAVSLFRRMGEEYKAEIIASIPSEEEISLYRQGDFVDLCRGPHVPSTARLKAFKLTKVAGAYWRGDANNEMLQRIYGTAWPDKKALKAYLHRLEEAEKRDHRRIGADLDLFSIQEEAGGGLVFWHPMGARIRRVIEDFWQERHTAAGYEMLYTPHIAHEELWQTSGHTDFYRESMYQPMEDDHQLYQLKPMNCPFHVLIYQGRLRSYRELPIRWAELGTVYRHEMSGALHGLMRVRGFTQDDAHIFCREEQIENEILGILDLTLEMLAAFGFDRYEIDLSTRPEKSVGPEAIWEQATQALRSALDKKGLDYAVDEGGGAFYGPKIDIKIEDAIGRKWQCSTVQLDFNLPERFAMEYVAEDGARHRPIMIHRAVLGSLERFFGVLIEHYEGKFPPWLAPVQVVVMSITDRQEGYARQVEEAMRNKGFRSLLDLRNEKIGFKIREHILRRIPYLLVIGDREVANQTVAVRTRYSQDLGAMSLDAFMEHLSVDVARLGHNISEED.

One can recognise a TGS domain in the interval 1–61 (MPVITLPDGS…EKDTKLTIIT (61 aa)). The catalytic stretch occupies residues 242–535 (DHRRIGADLD…LIEHYEGKFP (294 aa)). Zn(2+) is bound by residues cysteine 335, histidine 386, and histidine 512.

The protein belongs to the class-II aminoacyl-tRNA synthetase family. As to quaternary structure, homodimer. Requires Zn(2+) as cofactor.

Its subcellular location is the cytoplasm. It carries out the reaction tRNA(Thr) + L-threonine + ATP = L-threonyl-tRNA(Thr) + AMP + diphosphate + H(+). Functionally, catalyzes the attachment of threonine to tRNA(Thr) in a two-step reaction: L-threonine is first activated by ATP to form Thr-AMP and then transferred to the acceptor end of tRNA(Thr). Also edits incorrectly charged L-seryl-tRNA(Thr). The chain is Threonine--tRNA ligase from Nitrosococcus oceani (strain ATCC 19707 / BCRC 17464 / JCM 30415 / NCIMB 11848 / C-107).